A 277-amino-acid chain; its full sequence is Cell wall protein PGA30 (277 aa).

An N-terminal signal peptide occupies residues 1–18 (MKYFTIATVLTLASSALA). Asparagine 129 and asparagine 178 each carry an N-linked (GlcNAc...) asparagine glycan. The interval 219-246 (VLPSSSTEAPPKTSVAAPSTTAEAQTTA) is disordered. The segment covering 234-246 (AAPSTTAEAQTTA) has biased composition (polar residues). Glycine 253 carries the GPI-anchor amidated glycine lipid modification. Residues 254-277 (GANEIVGGGSMAIALAAAAIGLVI) constitute a propeptide, removed in mature form.

This sequence belongs to the SRP1/TIP1 family. Post-translationally, the GPI-anchor is attached to the protein in the endoplasmic reticulum and serves to target the protein to the cell surface. There, the glucosamine-inositol phospholipid moiety is cleaved off and the GPI-modified mannoprotein is covalently attached via its lipidless GPI glycan remnant to the 1,6-beta-glucan of the outer cell wall layer.

It is found in the secreted. It localises to the cell wall. The protein localises to the membrane. Its function is as follows. Component of the cell wall involved in virulence which plays a role in the relationship between C.albicans and the host. In Candida albicans (strain SC5314 / ATCC MYA-2876) (Yeast), this protein is Cell wall protein PGA30 (PGA30).